The sequence spans 725 residues: FYVE, RhoGEF and PH domain-containing protein 3 (725 aa).

Residues 1 to 151 are disordered; that stretch reads MESGRGSSTP…KADKDAGLAQ (151 aa). Acidic residues predominate over residues 124–136; sequence EEADSDVGEEPDS. A Phosphoserine modification is found at S128. The DH domain maps to 157-341; it reads KLLHIAQELL…STAANHSNAA (185 aa). The PH 1 domain occupies 370–469; it reads ELIKEGQIQK…WIQIIQATIE (100 aa). The tract at residues 487–532 is disordered; it reads QDEDPSLSPDMPITSTSPVEPVVTTEGSSGAAGLEPRKLSSKTRRD. Residues 500–512 are compositionally biased toward low complexity; sequence TSTSPVEPVVTTE. The span at 521–532 shows a compositional bias: basic and acidic residues; sequence EPRKLSSKTRRD. The FYVE-type zinc finger occupies 532–588; the sequence is DKEKQSCKSCGETFNSITKRRHHCKLCGAVICGKCSEFKAENSRQSRVCRDCFLTQP. Residues C538, C541, C555, C558, C563, C566, C580, and C583 each contribute to the Zn(2+) site. Residues 604–703 enclose the PH 2 domain; the sequence is PSLLCGPLRL…WLETLSTAAH (100 aa). Positions 703 to 725 are disordered; sequence HGDTAQDSPGALQLQVPMGAAAP.

It is found in the cytoplasm. Its subcellular location is the cytoskeleton. Functionally, promotes the formation of filopodia. May activate CDC42, a member of the Ras-like family of Rho- and Rac proteins, by exchanging bound GDP for free GTP. Plays a role in regulating the actin cytoskeleton and cell shape. The sequence is that of FYVE, RhoGEF and PH domain-containing protein 3 (FGD3) from Homo sapiens (Human).